We begin with the raw amino-acid sequence, 167 residues long: Peptide deformylase (167 aa).

Positions 91 and 133 each coordinate Fe cation. Glu-134 is an active-site residue. Residue His-137 participates in Fe cation binding.

It belongs to the polypeptide deformylase family. Fe(2+) is required as a cofactor.

It catalyses the reaction N-terminal N-formyl-L-methionyl-[peptide] + H2O = N-terminal L-methionyl-[peptide] + formate. Removes the formyl group from the N-terminal Met of newly synthesized proteins. Requires at least a dipeptide for an efficient rate of reaction. N-terminal L-methionine is a prerequisite for activity but the enzyme has broad specificity at other positions. The chain is Peptide deformylase from Pseudoalteromonas translucida (strain TAC 125).